The sequence spans 191 residues: DNA-directed RNA polymerase subunit Rpo3 (191 aa).

This sequence belongs to the archaeal Rpo3/eukaryotic RPB3 RNA polymerase subunit family. As to quaternary structure, part of the RNA polymerase complex. Interacts with Rpo12. Forms an Rpo3-Rpo10-Rpo11-Rpo12 complex upon coexpression.

The protein localises to the cytoplasm. The enzyme catalyses RNA(n) + a ribonucleoside 5'-triphosphate = RNA(n+1) + diphosphate. In terms of biological role, DNA-dependent RNA polymerase (RNAP) catalyzes the transcription of DNA into RNA using the four ribonucleoside triphosphates as substrates. This chain is DNA-directed RNA polymerase subunit Rpo3, found in Methanocaldococcus jannaschii (strain ATCC 43067 / DSM 2661 / JAL-1 / JCM 10045 / NBRC 100440) (Methanococcus jannaschii).